A 349-amino-acid chain; its full sequence is Succinylglutamate desuccinylase (349 aa).

Residues His-70, Glu-73, and His-166 each contribute to the Zn(2+) site. Glu-229 is a catalytic residue.

The protein belongs to the AspA/AstE family. Succinylglutamate desuccinylase subfamily. Zn(2+) is required as a cofactor.

The enzyme catalyses N-succinyl-L-glutamate + H2O = L-glutamate + succinate. The protein operates within amino-acid degradation; L-arginine degradation via AST pathway; L-glutamate and succinate from L-arginine: step 5/5. Transforms N(2)-succinylglutamate into succinate and glutamate. This chain is Succinylglutamate desuccinylase, found in Burkholderia thailandensis (strain ATCC 700388 / DSM 13276 / CCUG 48851 / CIP 106301 / E264).